Here is a 345-residue protein sequence, read N- to C-terminus: Anthranilate phosphoribosyltransferase (345 aa).

5-phospho-alpha-D-ribose 1-diphosphate-binding positions include glycine 75, 78–79 (GD), serine 83, 85–88 (NIST), 103–111 (KHGNRAASS), and glycine 115. Residue glycine 75 coordinates anthranilate. Serine 87 provides a ligand contact to Mg(2+). Asparagine 106 contributes to the anthranilate binding site. Position 161 (arginine 161) interacts with anthranilate. Residues aspartate 219 and glutamate 220 each coordinate Mg(2+).

Belongs to the anthranilate phosphoribosyltransferase family. Homodimer. The cofactor is Mg(2+).

It catalyses the reaction N-(5-phospho-beta-D-ribosyl)anthranilate + diphosphate = 5-phospho-alpha-D-ribose 1-diphosphate + anthranilate. Its pathway is amino-acid biosynthesis; L-tryptophan biosynthesis; L-tryptophan from chorismate: step 2/5. Catalyzes the transfer of the phosphoribosyl group of 5-phosphorylribose-1-pyrophosphate (PRPP) to anthranilate to yield N-(5'-phosphoribosyl)-anthranilate (PRA). The polypeptide is Anthranilate phosphoribosyltransferase (Nocardia farcinica (strain IFM 10152)).